A 438-amino-acid chain; its full sequence is Aspartate--tRNA(Asp) ligase (438 aa).

E170 contacts L-aspartate. An aspartate region spans residues 192–195; sequence QLYK. R214 provides a ligand contact to L-aspartate. ATP-binding positions include 214–216, 222–224, and E361; these read RAE and RHL. The Mg(2+) site is built by E361 and S364. The L-aspartate site is built by S364 and R368. Residue 409–412 coordinates ATP; sequence GAER.

This sequence belongs to the class-II aminoacyl-tRNA synthetase family. Type 2 subfamily. Homodimer. The cofactor is Mg(2+).

The protein resides in the cytoplasm. The catalysed reaction is tRNA(Asp) + L-aspartate + ATP = L-aspartyl-tRNA(Asp) + AMP + diphosphate. Catalyzes the attachment of L-aspartate to tRNA(Asp) in a two-step reaction: L-aspartate is first activated by ATP to form Asp-AMP and then transferred to the acceptor end of tRNA(Asp). Is specific for tRNA(Asp) since it aspartylates tRNA(Asn) 3 orders of magnitude less efficiently than tRNA(Asp). In Thermococcus kodakarensis (strain ATCC BAA-918 / JCM 12380 / KOD1) (Pyrococcus kodakaraensis (strain KOD1)), this protein is Aspartate--tRNA(Asp) ligase.